Consider the following 576-residue polypeptide: Zn(2)-C6 fungal-type transcription factor mpsE (576 aa).

The zn(2)-C6 fungal-type DNA-binding region spans 15–46 (CDRCRSHKLKCPQQPSTATGACQRCTRAKAQC). The span at 47-61 (TFSPRSRAIKNTQDG) shows a compositional bias: polar residues. 3 disordered regions span residues 47–123 (TFSP…GTFD), 334–369 (VAHA…SSTA), and 404–424 (HPAP…LHRR). Positions 95 to 109 (PPQQQQSDQQKPSGS) are enriched in low complexity.

The protein localises to the nucleus. In terms of biological role, transcription factor; part of the gene cluster that mediates the biosynthesis of macrophasetins, 3-decalinoyltetramic acids (DTAs) which feature a tetramate (pyrrolidine-2,4-dione) unit connected to a decalin fragment and that have potent bioactivities. The protein is Zn(2)-C6 fungal-type transcription factor mpsE of Macrophomina phaseolina (strain MS6) (Charcoal rot fungus).